Consider the following 304-residue polypeptide: GTPase Era (304 aa).

The region spanning 11 to 179 is the Era-type G domain; the sequence is YCGFIAIVGR…QKIVRKSLRE (169 aa). The G1 stretch occupies residues 19 to 26; it reads GRPNVGKS. 19-26 contacts GTP; that stretch reads GRPNVGKS. Positions 45–49 are G2; sequence QTTRH. Residues 66–69 are G3; sequence DTPG. Residues 66–70 and 128–131 each bind GTP; these read DTPGL and NKVD. The segment at 128 to 131 is G4; it reads NKVD. The tract at residues 158 to 160 is G5; it reads ISA. In terms of domain architecture, KH type-2 spans 210 to 287; it reads TGEELPYSVT…HLELWVKVKA (78 aa).

This sequence belongs to the TRAFAC class TrmE-Era-EngA-EngB-Septin-like GTPase superfamily. Era GTPase family. As to quaternary structure, monomer.

The protein resides in the cytoplasm. It is found in the cell inner membrane. Functionally, an essential GTPase that binds both GDP and GTP, with rapid nucleotide exchange. Plays a role in 16S rRNA processing and 30S ribosomal subunit biogenesis and possibly also in cell cycle regulation and energy metabolism. This chain is GTPase Era, found in Haemophilus ducreyi (strain 35000HP / ATCC 700724).